Reading from the N-terminus, the 553-residue chain is ATP synthase F(1) complex subunit alpha, mitochondrial (553 aa).

Residues 1–43 (MLSVRVAAAVARALPRRAGLVSKNALGSSFVGARNLHASNTRL) constitute a mitochondrion transit peptide. 2 positions are modified to phosphoserine: Ser-53 and Ser-65. Ser-76 carries the phosphoserine; alternate modification. O-linked (GlcNAc) serine; alternate glycosylation is present at Ser-76. Ser-106 carries the post-translational modification Phosphoserine. Lys-123, Lys-126, and Lys-132 each carry N6-acetyllysine. Thr-134 is subject to Phosphothreonine. N6-acetyllysine; alternate is present on Lys-161. Lys-161 carries the N6-succinyllysine; alternate modification. The residue at position 166 (Ser-166) is a Phosphoserine. Lys-167 is modified (N6-acetyllysine; alternate). Position 167 is an N6-succinyllysine; alternate (Lys-167). Residue Ser-184 is modified to Phosphoserine. At Arg-204 the chain carries Omega-N-methylarginine. 5 residues coordinate ATP: Gln-215, Gly-217, Lys-218, Thr-219, and Ser-220. Thr-219 serves as a coordination point for Mg(2+). N6-acetyllysine; alternate occurs at positions 230 and 239. Residues Lys-230 and Lys-239 each carry the N6-succinyllysine; alternate modification. Lys-240 is modified (N6-acetyllysine). 2 positions are modified to N6-acetyllysine; alternate: Lys-261 and Lys-305. 2 positions are modified to N6-succinyllysine; alternate: Lys-261 and Lys-305. A Mg(2+)-binding site is contributed by Asp-312. At Lys-427 the chain carries N6-acetyllysine; alternate. An N6-succinyllysine; alternate modification is found at Lys-427. The residue at position 434 (Lys-434) is an N6-acetyllysine. The ATP site is built by Gln-473 and Gln-475. N6-acetyllysine; alternate occurs at positions 498 and 506. Residues Lys-498 and Lys-506 each carry the N6-succinyllysine; alternate modification. Ser-521 carries the post-translational modification Phosphoserine. Residues Lys-531 and Lys-539 each carry the N6-acetyllysine; alternate modification. An N6-succinyllysine; alternate mark is found at Lys-531 and Lys-539. An N6-acetyllysine modification is found at Lys-541.

This sequence belongs to the ATPase alpha/beta chains family. In terms of assembly, homotrimer. Component of the ATP synthase complex composed at least of ATP5F1A/subunit alpha, ATP5F1B/subunit beta, ATP5MC1/subunit c (homooctomer), MT-ATP6/subunit a, MT-ATP8/subunit 8, ATP5ME/subunit e, ATP5MF/subunit f, ATP5MG/subunit g, ATP5MK/subunit k, ATP5MJ/subunit j, ATP5F1C/subunit gamma, ATP5F1D/subunit delta, ATP5F1E/subunit epsilon, ATP5PF/subunit F6, ATP5PB/subunit b, ATP5PD/subunit d, ATP5PO/subunit OSCP. ATP synthase complex consists of a soluble F(1) head domain (subunits alpha(3) and beta(3)) - the catalytic core - and a membrane F(0) domain - the membrane proton channel (subunits c, a, 8, e, f, g, k and j). These two domains are linked by a central stalk (subunits gamma, delta, and epsilon) rotating inside the F1 region and a stationary peripheral stalk (subunits F6, b, d, and OSCP). Interacts with ATPAF2. Interacts with HRG; the interaction occurs on the surface of T-cells and alters the cell morphology when associated with concanavalin (in vitro). Interacts with PLG (angiostatin peptide); the interaction inhibits most of the angiogenic properties of angiostatin. Interacts with BLOC1S1. Interacts with BCL2L1 isoform BCL-X(L); the interaction mediates the association of BCL2L1 isoform BCL-X(L) with the mitochondrial membrane F(1)F(0) ATP synthase and enhances neurons metabolic efficiency. Interacts with CLN5 and PPT1. Interacts with S100A1; this interaction increases F1-ATPase activity. Interacts with ABCB7; this interaction allows the regulation of cellular iron homeostasis and cellular reactive oxygen species (ROS) levels in cardiomyocytes. In terms of processing, acetylated on lysine residues. BLOC1S1 is required for acetylation. Acetylation of Lys-132, Lys-230 and Lys-498 is observed in liver mitochondria from fasted mice but not from fed mice.

It localises to the mitochondrion inner membrane. It is found in the cell membrane. In terms of biological role, subunit alpha, of the mitochondrial membrane ATP synthase complex (F(1)F(0) ATP synthase or Complex V) that produces ATP from ADP in the presence of a proton gradient across the membrane which is generated by electron transport complexes of the respiratory chain. ATP synthase complex consist of a soluble F(1) head domain - the catalytic core - and a membrane F(1) domain - the membrane proton channel. These two domains are linked by a central stalk rotating inside the F(1) region and a stationary peripheral stalk. During catalysis, ATP synthesis in the catalytic domain of F(1) is coupled via a rotary mechanism of the central stalk subunits to proton translocation. In vivo, can only synthesize ATP although its ATP hydrolase activity can be activated artificially in vitro. With the catalytic subunit beta (ATP5F1B), forms the catalytic core in the F(1) domain. Subunit alpha does not bear the catalytic high-affinity ATP-binding sites. In Mus musculus (Mouse), this protein is ATP synthase F(1) complex subunit alpha, mitochondrial.